Reading from the N-terminus, the 288-residue chain is tRNA (guanine-N(1)-)-methyltransferase (288 aa).

Residues 82 to 105 form a disordered region; the sequence is ATDAVDTSDPGDSAAPDSSAPSGA. A compositionally biased stretch (low complexity) spans 89-105; that stretch reads SDPGDSAAPDSSAPSGA. S-adenosyl-L-methionine is bound by residues Gly137 and 162-167; that span reads IGDYVL.

This sequence belongs to the RNA methyltransferase TrmD family. In terms of assembly, homodimer.

Its subcellular location is the cytoplasm. The catalysed reaction is guanosine(37) in tRNA + S-adenosyl-L-methionine = N(1)-methylguanosine(37) in tRNA + S-adenosyl-L-homocysteine + H(+). In terms of biological role, specifically methylates guanosine-37 in various tRNAs. This is tRNA (guanine-N(1)-)-methyltransferase from Bifidobacterium longum (strain DJO10A).